A 426-amino-acid chain; its full sequence is Mitogen-activated protein kinase 8 (426 aa).

Positions 26–321 (YQNLKPIGSG…VDDALQHPYI (296 aa)) constitute a Protein kinase domain. ATP contacts are provided by residues 33–38 (GSGAQG) and Lys-55. Catalysis depends on Asp-151, which acts as the Proton acceptor. Residue Thr-183 is modified to Phosphothreonine. A TXY motif is present at residues 183-185 (TPY). Tyr-185 is modified (phosphotyrosine). The segment at 375-426 (QPAPLGAAVTDGSQAHTSSSSGDASSMSTDPTLPSDTDSSLETSAGTLGCCR) is disordered. Low complexity predominate over residues 384–404 (TDGSQAHTSSSSGDASSMSTD). Polar residues predominate over residues 405–420 (PTLPSDTDSSLETSAG).

Belongs to the protein kinase superfamily. CMGC Ser/Thr protein kinase family. MAP kinase subfamily. The cofactor is Mg(2+). In terms of processing, dually phosphorylated on Thr-183 and Tyr-185, which activates the enzyme. As to expression, strongly expressed in presumptive ectoderm and mesoderm regions and weakly expressed in endoderm regions during early stages of embryo development. Expressed in the head and dorsal regions during neurula and tailbud stages.

It localises to the cytoplasm. It is found in the nucleus. Its subcellular location is the synapse. It catalyses the reaction L-seryl-[protein] + ATP = O-phospho-L-seryl-[protein] + ADP + H(+). The catalysed reaction is L-threonyl-[protein] + ATP = O-phospho-L-threonyl-[protein] + ADP + H(+). With respect to regulation, activated by threonine and tyrosine phosphorylation, potentially by the dual-specificity kinase, MKK7. Indirectly activated by Wnt5a. Its function is as follows. Responds to activation by environmental stress and pro-inflammatory cytokines by phosphorylating a number of transcription factors, and thus regulating transcriptional activity. Regulates morphogenic cell movements, controlling convergent extension during gastrulation. May play a role in the regulation of the circadian clock. The sequence is that of Mitogen-activated protein kinase 8 (mapk8) from Xenopus laevis (African clawed frog).